Reading from the N-terminus, the 204-residue chain is Holliday junction branch migration complex subunit RuvA (204 aa).

The segment at 1–67 (MIAFLSGHLV…ETELVLYGFG (67 aa)) is domain I. The domain II stretch occupies residues 68–146 (SPAERDLFVE…HWRQGMGVAD (79 aa)). A flexible linker region spans residues 147-157 (QPLAGGPPMPI). Positions 157–204 (IREEVEMALLALGYSTQEIQAALQALPTHPRPTEDWLRDAITYLSQQP) are domain III.

It belongs to the RuvA family. As to quaternary structure, homotetramer. Forms an RuvA(8)-RuvB(12)-Holliday junction (HJ) complex. HJ DNA is sandwiched between 2 RuvA tetramers; dsDNA enters through RuvA and exits via RuvB. An RuvB hexamer assembles on each DNA strand where it exits the tetramer. Each RuvB hexamer is contacted by two RuvA subunits (via domain III) on 2 adjacent RuvB subunits; this complex drives branch migration. In the full resolvosome a probable DNA-RuvA(4)-RuvB(12)-RuvC(2) complex forms which resolves the HJ.

The protein resides in the cytoplasm. The RuvA-RuvB-RuvC complex processes Holliday junction (HJ) DNA during genetic recombination and DNA repair, while the RuvA-RuvB complex plays an important role in the rescue of blocked DNA replication forks via replication fork reversal (RFR). RuvA specifically binds to HJ cruciform DNA, conferring on it an open structure. The RuvB hexamer acts as an ATP-dependent pump, pulling dsDNA into and through the RuvAB complex. HJ branch migration allows RuvC to scan DNA until it finds its consensus sequence, where it cleaves and resolves the cruciform DNA. This chain is Holliday junction branch migration complex subunit RuvA, found in Synechococcus sp. (strain JA-2-3B'a(2-13)) (Cyanobacteria bacterium Yellowstone B-Prime).